A 1031-amino-acid polypeptide reads, in one-letter code: Putative glycine dehydrogenase (decarboxylating), mitochondrial (1031 aa).

The N-terminal 49 residues, methionine 1–leucine 49, are a transit peptide targeting the mitochondrion. Lysine 783 carries the post-translational modification N6-(pyridoxal phosphate)lysine.

This sequence belongs to the GcvP family. The cofactor is pyridoxal 5'-phosphate.

It localises to the mitochondrion. The enzyme catalyses N(6)-[(R)-lipoyl]-L-lysyl-[glycine-cleavage complex H protein] + glycine + H(+) = N(6)-[(R)-S(8)-aminomethyldihydrolipoyl]-L-lysyl-[glycine-cleavage complex H protein] + CO2. In terms of biological role, the glycine cleavage system catalyzes the degradation of glycine. The P protein binds the alpha-amino group of glycine through its pyridoxal phosphate cofactor; CO(2) is released and the remaining methylamine moiety is then transferred to the lipoamide cofactor of the H protein. The protein is Putative glycine dehydrogenase (decarboxylating), mitochondrial (gcv2) of Schizosaccharomyces pombe (strain 972 / ATCC 24843) (Fission yeast).